Reading from the N-terminus, the 132-residue chain is Small ribosomal subunit protein uS8 (132 aa).

The protein belongs to the universal ribosomal protein uS8 family. As to quaternary structure, part of the 30S ribosomal subunit. Contacts proteins S5 and S12.

Its function is as follows. One of the primary rRNA binding proteins, it binds directly to 16S rRNA central domain where it helps coordinate assembly of the platform of the 30S subunit. The chain is Small ribosomal subunit protein uS8 from Leptospira biflexa serovar Patoc (strain Patoc 1 / Ames).